The chain runs to 182 residues: RFKKIRRLGALPGLTSKRPRSGIDLKNQLRSGKRSQYRIRLEEKQKLRFHYGLTERQLLKYVHIAGKAKGSTGQVLLQLLEMRLDNILFRLGMASTIPGARQLVNHRHILVNGRIVDIPSYRCKPRDIITTKDKERSKVLIQNYIASSPHEELPNHLTIDPLQYKGLVNQIIDSKWIGLKIN.

Residues 82-143 (MRLDNILFRL…KERSKVLIQN (62 aa)) enclose the S4 RNA-binding domain.

The protein belongs to the universal ribosomal protein uS4 family. As to quaternary structure, part of the 30S ribosomal subunit. Contacts protein S5. The interaction surface between S4 and S5 is involved in control of translational fidelity.

Its subcellular location is the plastid. It localises to the chloroplast. Functionally, one of the primary rRNA binding proteins, it binds directly to 16S rRNA where it nucleates assembly of the body of the 30S subunit. In terms of biological role, with S5 and S12 plays an important role in translational accuracy. This chain is Small ribosomal subunit protein uS4c (rps4), found in Tigridia sp. (strain Lejeune 1997).